The following is a 102-amino-acid chain: 10 kDa heat shock protein, mitochondrial (102 aa).

At Ala-2 the chain carries N-acetylalanine. Lys-8 carries the N6-acetyllysine modification. The residue at position 28 (Lys-28) is an N6-succinyllysine. Lys-40 is modified (N6-acetyllysine; alternate). An N6-malonyllysine; alternate mark is found at Lys-40, Lys-54, and Lys-56. Residues Lys-40, Lys-54, Lys-56, Lys-66, and Lys-70 each carry the N6-succinyllysine; alternate modification. N6-acetyllysine; alternate is present on residues Lys-56, Lys-66, and Lys-70. Thr-79 carries the post-translational modification Phosphothreonine. N6-acetyllysine; alternate occurs at positions 80 and 86. N6-succinyllysine; alternate is present on residues Lys-80 and Lys-86. Residue Lys-99 is modified to N6-acetyllysine.

The protein belongs to the GroES chaperonin family. As to quaternary structure, homoheptamer arranged in a ring structure. 2 heptameric Hsp10 rings interact with a Hsp60 tetradecamer in the structure of a back-to-back double heptameric ring to form the symmetrical football complex.

It localises to the mitochondrion matrix. Functionally, co-chaperonin implicated in mitochondrial protein import and macromolecular assembly. Together with Hsp60, facilitates the correct folding of imported proteins. May also prevent misfolding and promote the refolding and proper assembly of unfolded polypeptides generated under stress conditions in the mitochondrial matrix. The functional units of these chaperonins consist of heptameric rings of the large subunit Hsp60, which function as a back-to-back double ring. In a cyclic reaction, Hsp60 ring complexes bind one unfolded substrate protein per ring, followed by the binding of ATP and association with 2 heptameric rings of the co-chaperonin Hsp10. This leads to sequestration of the substrate protein in the inner cavity of Hsp60 where, for a certain period of time, it can fold undisturbed by other cell components. Synchronous hydrolysis of ATP in all Hsp60 subunits results in the dissociation of the chaperonin rings and the release of ADP and the folded substrate protein. In Rattus norvegicus (Rat), this protein is 10 kDa heat shock protein, mitochondrial (Hspe1).